We begin with the raw amino-acid sequence, 107 residues long: Cytochrome c-550 (107 aa).

Heme c-binding residues include cysteine 11, cysteine 14, histidine 15, and methionine 80.

In terms of processing, binds 1 heme c group covalently per subunit.

The polypeptide is Cytochrome c-550 (Ancylobacter novellus (Thiobacillus novellus)).